A 179-amino-acid polypeptide reads, in one-letter code: GTP-dependent dephospho-CoA kinase (179 aa).

Residues Asp55, Val57, Asp74, Lys76, and Glu128 each contribute to the GTP site.

This sequence belongs to the GTP-dependent DPCK family.

The enzyme catalyses 3'-dephospho-CoA + GTP = GDP + CoA + H(+). It participates in cofactor biosynthesis; coenzyme A biosynthesis. Functionally, catalyzes the GTP-dependent phosphorylation of the 3'-hydroxyl group of dephosphocoenzyme A to form coenzyme A (CoA). The chain is GTP-dependent dephospho-CoA kinase from Saccharolobus solfataricus (strain ATCC 35092 / DSM 1617 / JCM 11322 / P2) (Sulfolobus solfataricus).